Here is a 94-residue protein sequence, read N- to C-terminus: Large ribosomal subunit protein bL25 (94 aa).

It belongs to the bacterial ribosomal protein bL25 family. Part of the 50S ribosomal subunit; part of the 5S rRNA/L5/L18/L25 subcomplex. Contacts the 5S rRNA. Binds to the 5S rRNA independently of L5 and L18.

Functionally, this is one of the proteins that binds to the 5S RNA in the ribosome where it forms part of the central protuberance. In Citrobacter koseri (strain ATCC BAA-895 / CDC 4225-83 / SGSC4696), this protein is Large ribosomal subunit protein bL25.